The sequence spans 353 residues: Anthranilate phosphoribosyltransferase (353 aa).

5-phospho-alpha-D-ribose 1-diphosphate is bound by residues glycine 86, 89 to 90 (GD), 96 to 99 (NVST), 114 to 122 (KHGNRAVSG), and serine 126. An anthranilate-binding site is contributed by glycine 86. A Mg(2+)-binding site is contributed by serine 98. Asparagine 117 provides a ligand contact to anthranilate. Arginine 172 is an anthranilate binding site. The Mg(2+) site is built by aspartate 231 and glutamate 232.

It belongs to the anthranilate phosphoribosyltransferase family. Homodimer. The cofactor is Mg(2+).

The enzyme catalyses N-(5-phospho-beta-D-ribosyl)anthranilate + diphosphate = 5-phospho-alpha-D-ribose 1-diphosphate + anthranilate. Its pathway is amino-acid biosynthesis; L-tryptophan biosynthesis; L-tryptophan from chorismate: step 2/5. In terms of biological role, catalyzes the transfer of the phosphoribosyl group of 5-phosphorylribose-1-pyrophosphate (PRPP) to anthranilate to yield N-(5'-phosphoribosyl)-anthranilate (PRA). This is Anthranilate phosphoribosyltransferase from Pseudomonas syringae pv. syringae (strain B728a).